The following is a 240-amino-acid chain: 4-hydroxy-tetrahydrodipicolinate reductase (240 aa).

7-12 (GLSGTM) is an NAD(+) binding site. An NADP(+)-binding site is contributed by Lys35. Residues 74 to 76 (GTT) and 98 to 101 (ATNM) contribute to the NAD(+) site. His131 serves as the catalytic Proton donor/acceptor. His132 serves as a coordination point for (S)-2,3,4,5-tetrahydrodipicolinate. Residue Lys135 is the Proton donor of the active site. 141–142 (GS) contributes to the (S)-2,3,4,5-tetrahydrodipicolinate binding site.

It belongs to the DapB family.

Its subcellular location is the cytoplasm. The enzyme catalyses (S)-2,3,4,5-tetrahydrodipicolinate + NAD(+) + H2O = (2S,4S)-4-hydroxy-2,3,4,5-tetrahydrodipicolinate + NADH + H(+). It carries out the reaction (S)-2,3,4,5-tetrahydrodipicolinate + NADP(+) + H2O = (2S,4S)-4-hydroxy-2,3,4,5-tetrahydrodipicolinate + NADPH + H(+). It participates in amino-acid biosynthesis; L-lysine biosynthesis via DAP pathway; (S)-tetrahydrodipicolinate from L-aspartate: step 4/4. Catalyzes the conversion of 4-hydroxy-tetrahydrodipicolinate (HTPA) to tetrahydrodipicolinate. The sequence is that of 4-hydroxy-tetrahydrodipicolinate reductase from Alkaliphilus metalliredigens (strain QYMF).